Reading from the N-terminus, the 236-residue chain is Cytochrome c biogenesis ATP-binding export protein CcmA (236 aa).

The region spanning L14–E235 is the ABC transporter domain. G46–T53 is an ATP binding site.

This sequence belongs to the ABC transporter superfamily. CcmA exporter (TC 3.A.1.107) family. In terms of assembly, the complex is composed of two ATP-binding proteins (CcmA) and two transmembrane proteins (CcmB).

It localises to the cell inner membrane. The catalysed reaction is heme b(in) + ATP + H2O = heme b(out) + ADP + phosphate + H(+). Part of the ABC transporter complex CcmAB involved in the biogenesis of c-type cytochromes; once thought to export heme, this seems not to be the case, but its exact role is uncertain. Responsible for energy coupling to the transport system. This chain is Cytochrome c biogenesis ATP-binding export protein CcmA, found in Alkalilimnicola ehrlichii (strain ATCC BAA-1101 / DSM 17681 / MLHE-1).